The following is a 397-amino-acid chain: Elongation factor Tu (397 aa).

The tr-type G domain occupies 10–207 (KPHVNVGTVG…AIDAYVPDPV (198 aa)). Residues 19–26 (GHIDHGKT) are G1. Residue 19–26 (GHIDHGKT) participates in GTP binding. Thr-26 is a binding site for Mg(2+). The segment at 60–64 (GITIA) is G2. The segment at 81–84 (DCPG) is G3. GTP is bound by residues 81–85 (DCPGH) and 136–139 (NKVD). The segment at 136 to 139 (NKVD) is G4. A G5 region spans residues 174 to 176 (SAL).

Belongs to the TRAFAC class translation factor GTPase superfamily. Classic translation factor GTPase family. EF-Tu/EF-1A subfamily. Monomer.

The protein localises to the cytoplasm. It carries out the reaction GTP + H2O = GDP + phosphate + H(+). Functionally, GTP hydrolase that promotes the GTP-dependent binding of aminoacyl-tRNA to the A-site of ribosomes during protein biosynthesis. The chain is Elongation factor Tu from Syntrophobacter fumaroxidans (strain DSM 10017 / MPOB).